We begin with the raw amino-acid sequence, 212 residues long: Thiamine-phosphate synthase (212 aa).

Residues 35–39 (QLRRK) and N67 each bind 4-amino-2-methyl-5-(diphosphooxymethyl)pyrimidine. D68 and D87 together coordinate Mg(2+). S106 is a 4-amino-2-methyl-5-(diphosphooxymethyl)pyrimidine binding site. 132–134 (TGS) contacts 2-[(2R,5Z)-2-carboxy-4-methylthiazol-5(2H)-ylidene]ethyl phosphate. K135 contributes to the 4-amino-2-methyl-5-(diphosphooxymethyl)pyrimidine binding site. 2-[(2R,5Z)-2-carboxy-4-methylthiazol-5(2H)-ylidene]ethyl phosphate-binding positions include G163 and 183 to 184 (IS).

It belongs to the thiamine-phosphate synthase family. Mg(2+) serves as cofactor.

It catalyses the reaction 2-[(2R,5Z)-2-carboxy-4-methylthiazol-5(2H)-ylidene]ethyl phosphate + 4-amino-2-methyl-5-(diphosphooxymethyl)pyrimidine + 2 H(+) = thiamine phosphate + CO2 + diphosphate. It carries out the reaction 2-(2-carboxy-4-methylthiazol-5-yl)ethyl phosphate + 4-amino-2-methyl-5-(diphosphooxymethyl)pyrimidine + 2 H(+) = thiamine phosphate + CO2 + diphosphate. The catalysed reaction is 4-methyl-5-(2-phosphooxyethyl)-thiazole + 4-amino-2-methyl-5-(diphosphooxymethyl)pyrimidine + H(+) = thiamine phosphate + diphosphate. Its pathway is cofactor biosynthesis; thiamine diphosphate biosynthesis; thiamine phosphate from 4-amino-2-methyl-5-diphosphomethylpyrimidine and 4-methyl-5-(2-phosphoethyl)-thiazole: step 1/1. Its function is as follows. Condenses 4-methyl-5-(beta-hydroxyethyl)thiazole monophosphate (THZ-P) and 2-methyl-4-amino-5-hydroxymethyl pyrimidine pyrophosphate (HMP-PP) to form thiamine monophosphate (TMP). This is Thiamine-phosphate synthase from Chlorobium luteolum (strain DSM 273 / BCRC 81028 / 2530) (Pelodictyon luteolum).